Reading from the N-terminus, the 302-residue chain is Nucleotide-binding protein Bcep18194_A6125 (302 aa).

8–15 is an ATP binding site; the sequence is GISGSGKS. 57–60 contacts GTP; it reads DARS.

Belongs to the RapZ-like family.

Displays ATPase and GTPase activities. This Burkholderia lata (strain ATCC 17760 / DSM 23089 / LMG 22485 / NCIMB 9086 / R18194 / 383) protein is Nucleotide-binding protein Bcep18194_A6125.